A 1342-amino-acid polypeptide reads, in one-letter code: DNA-directed RNA polymerase subunit beta (1342 aa).

This sequence belongs to the RNA polymerase beta chain family. As to quaternary structure, the RNAP catalytic core consists of 2 alpha, 1 beta, 1 beta' and 1 omega subunit. When a sigma factor is associated with the core the holoenzyme is formed, which can initiate transcription.

The enzyme catalyses RNA(n) + a ribonucleoside 5'-triphosphate = RNA(n+1) + diphosphate. Its function is as follows. DNA-dependent RNA polymerase catalyzes the transcription of DNA into RNA using the four ribonucleoside triphosphates as substrates. The protein is DNA-directed RNA polymerase subunit beta of Pseudoalteromonas atlantica (strain T6c / ATCC BAA-1087).